A 2723-amino-acid polypeptide reads, in one-letter code: Zinc finger protein 292 (2723 aa).

A C2H2-type 1 zinc finger spans residues 569 to 591 (YSCPICAKNFNSKETFVPHVTLH). Residues 608–633 (RLGRPPKITTTNENQKTNTVAKQEQR) are disordered. The span at 615–629 (ITTTNENQKTNTVAK) shows a compositional bias: polar residues. Serine 654 bears the Phosphoserine mark. C2H2-type zinc fingers lie at residues 681–705 (FNCPVTFCKKGFKYFKNLIAHVKGH), 722–744 (VICQYCRRHFVSVTHLNDHLQMH), 750–774 (YICIQMKCKAGFNSYAELLTHRKEH), 779–803 (AKCMFPKCGRIFSEAYLLYDHEAQH), and 807–831 (YTCKFTGCGKVYRSQGELEKHLDDH). A compositionally biased stretch (basic and acidic residues) spans 825–834 (EKHLDDHSTP). Residues 825-860 (EKHLDDHSTPPEKVLPPEAQLNSSGDSIQPSEVNQN) form a disordered region. Polar residues predominate over residues 844–860 (QLNSSGDSIQPSEVNQN). A C2H2-type 7 zinc finger spans residues 1098–1123 (FSCQVEGCTRTYNSSQSIGKHMKTAH). Lysine 1117 carries the post-translational modification N6-acetyllysine. Serine 1159 is modified (phosphoserine). The tract at residues 1331–1364 (SSTNAQQSAPEKVKKDRGRGPNGKERKPKHNKRA) is disordered. Basic and acidic residues predominate over residues 1341–1355 (EKVKKDRGRGPNGKE). The segment at 1375–1397 (FICSRCYRAFTNPRSLGGHLSKR) adopts a C2H2-type 8; degenerate zinc-finger fold. Over residues 1588 to 1627 (SFPNSGGPSQNFTSNSSRVSVISGPQNTRSSHLNKKGNSA) the composition is skewed to polar residues. Residues 1588 to 1634 (SFPNSGGPSQNFTSNSSRVSVISGPQNTRSSHLNKKGNSASKRRKKV) form a disordered region. Residues 1827-1854 (QSEVSHKEDQIQEILEGLQKLKLENDLS) adopt a coiled-coil conformation. 2 consecutive C2H2-type zinc fingers follow at residues 1902-1927 (FVCQNQGCNYSAMTKDALFKHYGKIH) and 1947-1972 (FKCVVPTCTKTFTRNSNLRAHCQLVH). A disordered region spans residues 1986–2023 (RPYGRKSQSENVPASRSTQVKKQLAMTEENKKESQPAL). The span at 1994 to 2006 (SENVPASRSTQVK) shows a compositional bias: polar residues. An N6-acetyllysine modification is found at lysine 2042. The interval 2074 to 2103 (NTQTKGRKIRRHKKEKEEKKRKKPVSQSLE) is disordered. Residues 2078–2097 (KGRKIRRHKKEKEEKKRKKP) show a composition bias toward basic residues. 4 consecutive C2H2-type zinc fingers follow at residues 2114 to 2139 (YRCVHQGCFAAFTIQQNLILHYQAVH), 2172 to 2197 (FRCQVSDCSRIFQAITGLIQHYMKLH), 2216 to 2241 (FPCDQLECKSSFTTYLNYVVHLEADH), and 2256 to 2281 (YKCDCEGCDRIYATRSNLLRHIFNKH). 2 stretches are compositionally biased toward basic residues: residues 2285–2294 (HKAHLIRPRR) and 2312–2322 (KSKHRGTKHSR). The disordered stretch occupies residues 2285 to 2345 (HKAHLIRPRR…KKKNNLENKN (61 aa)). The C2H2-type 15 zinc-finger motif lies at 2386 to 2410 (YPCMIKGCTSVVTSESNIIRHYKCH). The span at 2441-2452 (QEGAKNDVKDSD) shows a compositional bias: basic and acidic residues. 3 disordered regions span residues 2441–2480 (QEGAKNDVKDSDTCVSESNDNSRTTATVSQKEVEKNEKDE), 2530–2564 (LKRVNKEKNVSQNKKRKVEKAEPASAAELSSVRKE), and 2606–2631 (QKKNTDKDHPNTGNKKGSHSNSRKNI). Residues 2453 to 2470 (TCVSESNDNSRTTATVSQ) are compositionally biased toward polar residues. The span at 2606–2615 (QKKNTDKDHP) shows a compositional bias: basic and acidic residues.

The protein belongs to the krueppel C2H2-type zinc-finger protein family.

Its subcellular location is the nucleus. Its function is as follows. May be involved in transcriptional regulation. In Homo sapiens (Human), this protein is Zinc finger protein 292 (ZNF292).